Here is a 162-residue protein sequence, read N- to C-terminus: NADH-quinone oxidoreductase subunit C (162 aa).

It belongs to the complex I 30 kDa subunit family. In terms of assembly, NDH-1 is composed of 14 different subunits. Subunits NuoB, C, D, E, F, and G constitute the peripheral sector of the complex.

It localises to the cell inner membrane. It catalyses the reaction a quinone + NADH + 5 H(+)(in) = a quinol + NAD(+) + 4 H(+)(out). NDH-1 shuttles electrons from NADH, via FMN and iron-sulfur (Fe-S) centers, to quinones in the respiratory chain. The immediate electron acceptor for the enzyme in this species is believed to be ubiquinone. Couples the redox reaction to proton translocation (for every two electrons transferred, four hydrogen ions are translocated across the cytoplasmic membrane), and thus conserves the redox energy in a proton gradient. The sequence is that of NADH-quinone oxidoreductase subunit C from Geobacter metallireducens (strain ATCC 53774 / DSM 7210 / GS-15).